Consider the following 272-residue polypeptide: D-aminoacyl-tRNA deacylase (272 aa).

This sequence belongs to the DtdA deacylase family. As to quaternary structure, monomer. Requires Zn(2+) as cofactor.

It carries out the reaction a D-aminoacyl-tRNA + H2O = a tRNA + a D-alpha-amino acid + H(+). The enzyme catalyses glycyl-tRNA(Ala) + H2O = tRNA(Ala) + glycine + H(+). Functionally, D-aminoacyl-tRNA deacylase with broad substrate specificity. By recycling D-aminoacyl-tRNA to D-amino acids and free tRNA molecules, this enzyme counteracts the toxicity associated with the formation of D-aminoacyl-tRNA entities in vivo. This Thermococcus kodakarensis (strain ATCC BAA-918 / JCM 12380 / KOD1) (Pyrococcus kodakaraensis (strain KOD1)) protein is D-aminoacyl-tRNA deacylase.